A 1526-amino-acid chain; its full sequence is Ig-like and fibronectin type-III domain-containing protein 2 (1526 aa).

The signal sequence occupies residues 1–19 (MMRWRLAVLFLTLLASTTG). The tract at residues 20 to 39 (DDTTTKASVSTTTKKGTDGP) is disordered. Topologically, residues 20–1415 (DDTTTKASVS…RRSASKGSSS (1396 aa)) are extracellular. Residues 24–33 (TKASVSTTTK) are compositionally biased toward low complexity. The 132-residue stretch at 39–170 (PHLTTDDEGF…ELLEFQVEVL (132 aa)) folds into the Ig-like C2-type 1 domain. The cysteines at positions 61 and 154 are disulfide-linked. N-linked (GlcNAc...) asparagine glycans are attached at residues Asn-87, Asn-143, Asn-158, Asn-181, Asn-414, Asn-427, Asn-475, Asn-489, Asn-533, Asn-590, Asn-617, and Asn-662. One can recognise a Fibronectin type-III 1 domain in the interval 379–470 (APRGKRDVDF…VRNIASTNVH (92 aa)). Residues 587-678 (APGNVTISEL…TAKLFSTLPT (92 aa)) enclose the Fibronectin type-III 2 domain. Positions 682-724 (PLCTIGEPIYMNDGRVMICDAVNPCPNGFRCTGAGSDLSYCCP) constitute a WR1 domain. N-linked (GlcNAc...) asparagine glycosylation is found at Asn-754, Asn-871, Asn-906, Asn-939, Asn-979, Asn-1004, and Asn-1049. Fibronectin type-III domains follow at residues 827 to 914 (AVRN…TKPA) and 924 to 1020 (APEK…AQKD). The Ig-like C2-type 2 domain occupies 1116–1207 (ASVTMKKDKI…SRVEASSEVI (92 aa)). Cys-1137 and Cys-1190 are disulfide-bonded. An N-linked (GlcNAc...) asparagine glycan is attached at Asn-1250. The region spanning 1314-1406 (APSEVSNVRI…SAIPKDSEPR (93 aa)) is the Fibronectin type-III 5 domain. The chain crosses the membrane as a helical span at residues 1416-1436 (AFWIVVILVVFGVLIAGLAVL). At 1437–1526 (SKRRELPYPI…NGMRYAKLET (90 aa)) the chain is on the cytoplasmic side. The segment at 1485-1518 (SATTGTAAATQSEWQSANLEANSTTDNSHEYRNG) is disordered. Residues 1495-1510 (QSEWQSANLEANSTTD) are compositionally biased toward polar residues.

The protein resides in the cell membrane. This Caenorhabditis elegans protein is Ig-like and fibronectin type-III domain-containing protein 2.